Reading from the N-terminus, the 247-residue chain is Uridylate kinase (247 aa).

An ATP-binding site is contributed by lysine 18–glycine 21. Residue glycine 60 coordinates UMP. 2 residues coordinate ATP: glycine 61 and arginine 65. UMP contacts are provided by residues aspartate 80 and threonine 141–threonine 148. ATP is bound by residues threonine 168, tyrosine 174, and aspartate 177.

It belongs to the UMP kinase family. Homohexamer.

The protein localises to the cytoplasm. The catalysed reaction is UMP + ATP = UDP + ADP. It participates in pyrimidine metabolism; CTP biosynthesis via de novo pathway; UDP from UMP (UMPK route): step 1/1. Inhibited by UTP. Its function is as follows. Catalyzes the reversible phosphorylation of UMP to UDP. This is Uridylate kinase from Pseudomonas savastanoi pv. phaseolicola (strain 1448A / Race 6) (Pseudomonas syringae pv. phaseolicola (strain 1448A / Race 6)).